Consider the following 150-residue polypeptide: Large ribosomal subunit protein uL15 (150 aa).

Positions 1 to 57 are disordered; the sequence is MRLEDIRPQAGSTRRRRRLGRGVSAGQGASCGKGMRGQKARKGGSTRPGFEGGQTPL. Over residues 23 to 35 the composition is skewed to gly residues; it reads VSAGQGASCGKGM.

It belongs to the universal ribosomal protein uL15 family. As to quaternary structure, part of the 50S ribosomal subunit.

Functionally, binds to the 23S rRNA. In Synechococcus sp. (strain JA-2-3B'a(2-13)) (Cyanobacteria bacterium Yellowstone B-Prime), this protein is Large ribosomal subunit protein uL15.